The following is a 294-amino-acid chain: dTDP-4-dehydrorhamnose reductase (294 aa).

NADH is bound by residues 11–13 (GQL), 38–39 (DI), and 62–64 (AYT). Residues 12-13 (QL), 38-39 (DI), and 62-64 (AYT) each bind NADPH. Position 103 to 104 (103 to 104 (TD)) interacts with dTDP-beta-L-rhamnose. Residues tyrosine 127 and lysine 131 each coordinate NADH. Residues tyrosine 127 and lysine 131 each contribute to the NADPH site. The active-site Proton donor/acceptor is the tyrosine 127. Tryptophan 152 serves as a coordination point for dTDP-beta-L-rhamnose.

The protein belongs to the dTDP-4-dehydrorhamnose reductase family. As to quaternary structure, homodimer. Mg(2+) is required as a cofactor.

The catalysed reaction is dTDP-beta-L-rhamnose + NADP(+) = dTDP-4-dehydro-beta-L-rhamnose + NADPH + H(+). It participates in carbohydrate biosynthesis; dTDP-L-rhamnose biosynthesis. The protein operates within bacterial outer membrane biogenesis; LPS O-antigen biosynthesis. In terms of biological role, involved in the biosynthesis of the dTDP-L-rhamnose which is an important component of lipopolysaccharide (LPS). Catalyzes the reduction of dTDP-6-deoxy-L-lyxo-4-hexulose to yield dTDP-L-rhamnose. The chain is dTDP-4-dehydrorhamnose reductase from Aggregatibacter actinomycetemcomitans (Actinobacillus actinomycetemcomitans).